We begin with the raw amino-acid sequence, 287 residues long: tRNA pseudouridine synthase B (287 aa).

Catalysis depends on D38, which acts as the Nucleophile.

It belongs to the pseudouridine synthase TruB family. Type 1 subfamily.

It carries out the reaction uridine(55) in tRNA = pseudouridine(55) in tRNA. Functionally, responsible for synthesis of pseudouridine from uracil-55 in the psi GC loop of transfer RNAs. This is tRNA pseudouridine synthase B from Aquifex aeolicus (strain VF5).